Consider the following 175-residue polypeptide: Avenin-like a7 (175 aa).

Residues 1 to 19 (MKTMFILALLAFTATSAVA) form the signal peptide.

Belongs to the prolamin family. Post-translationally, contains 7 disulfide bonds.

Seed storage protein. Not integrated in the gluten polymer through disulfide bonds, unless incorporated by reduction and reoxidation during dough making. Increases dough strength and bread volume, but decreases dough stability when added into a base wheat flour. The sequence is that of Avenin-like a7 from Triticum aestivum (Wheat).